A 284-amino-acid chain; its full sequence is 1D-myo-inositol 2-acetamido-2-deoxy-alpha-D-glucopyranoside deacetylase (284 aa).

Zn(2+)-binding residues include His-12, Asp-15, and His-146.

The protein belongs to the MshB deacetylase family. It depends on Zn(2+) as a cofactor.

The catalysed reaction is 1D-myo-inositol 2-acetamido-2-deoxy-alpha-D-glucopyranoside + H2O = 1D-myo-inositol 2-amino-2-deoxy-alpha-D-glucopyranoside + acetate. Functionally, catalyzes the deacetylation of 1D-myo-inositol 2-acetamido-2-deoxy-alpha-D-glucopyranoside (GlcNAc-Ins) in the mycothiol biosynthesis pathway. The polypeptide is 1D-myo-inositol 2-acetamido-2-deoxy-alpha-D-glucopyranoside deacetylase (Mycolicibacterium vanbaalenii (strain DSM 7251 / JCM 13017 / BCRC 16820 / KCTC 9966 / NRRL B-24157 / PYR-1) (Mycobacterium vanbaalenii)).